A 328-amino-acid chain; its full sequence is UDP-N-acetylglucosamine transporter YEA4 (328 aa).

Helical transmembrane passes span 1–21 (MSFVLILSLVFGGCCSNVISF), 30–50 (INLGNIVTFTQFVSVTLIQLP), 66–86 (HIPLKIHMLAVFLFFTSSVAN), 98–118 (IHIIIRCSGTTLTMIIGWAVC), 122–142 (YSKLQVQSAIIMTLGAIVASL), 166–186 (SMFGIFVVLVATALMSLLSLL), 198–218 (WKETLFYSHFLALPLFMLGYT), 241–261 (LPIATKLFMLIANNVTQFICI), 274–294 (LTLSVVLLVRKFVSLLLSVYI), and 298–318 (VLSVTAYLGTITVFLGAGLYS).

It belongs to the nucleotide-sugar transporter family. SLC35A subfamily.

It localises to the golgi apparatus membrane. Functionally, sugar transporter that specifically mediates the transport of UDP-N-acetylglucosamine (UDP-GlcNAc) from the cytosol into Golgi vesicles where glycosyltransferases function. This is UDP-N-acetylglucosamine transporter YEA4 (YEA4) from Kluyveromyces lactis (strain ATCC 8585 / CBS 2359 / DSM 70799 / NBRC 1267 / NRRL Y-1140 / WM37) (Yeast).